The primary structure comprises 334 residues: Transcription initiation factor IIB (334 aa).

The TFIIB-type zinc finger occupies 34–65 (TETVCPECGGRQLVHDYERAELVCQSCGLVID). Zn(2+) contacts are provided by C38, C41, C57, and C60. 2 consecutive repeat copies span residues 151–234 (SELD…SREL) and 245–326 (DYVP…ELAE).

The protein belongs to the TFIIB family.

Stabilizes TBP binding to an archaeal box-A promoter. Also responsible for recruiting RNA polymerase II to the pre-initiation complex (DNA-TBP-TFIIB). This is Transcription initiation factor IIB from Methanoregula boonei (strain DSM 21154 / JCM 14090 / 6A8).